Consider the following 376-residue polypeptide: Quinolinate synthase (376 aa).

Residues His57 and Ser78 each coordinate iminosuccinate. Cys123 is a [4Fe-4S] cluster binding site. Residues 149–151 (YAN) and Ser166 each bind iminosuccinate. Residue Cys210 coordinates [4Fe-4S] cluster. Residues 236–238 (HPE) and Thr253 each bind iminosuccinate. Residue Cys307 coordinates [4Fe-4S] cluster.

It belongs to the quinolinate synthase family. Type 1 subfamily. The cofactor is [4Fe-4S] cluster.

It is found in the cytoplasm. The enzyme catalyses iminosuccinate + dihydroxyacetone phosphate = quinolinate + phosphate + 2 H2O + H(+). It functions in the pathway cofactor biosynthesis; NAD(+) biosynthesis; quinolinate from iminoaspartate: step 1/1. Catalyzes the condensation of iminoaspartate with dihydroxyacetone phosphate to form quinolinate. The protein is Quinolinate synthase of Paraburkholderia phymatum (strain DSM 17167 / CIP 108236 / LMG 21445 / STM815) (Burkholderia phymatum).